The primary structure comprises 216 residues: ATP-dependent dethiobiotin synthetase BioD (216 aa).

13 to 18 (EVGKTY) contacts ATP. Mg(2+) is bound at residue Thr17. Lys38 is a catalytic residue. Position 42 (Thr42) interacts with substrate. ATP contacts are provided by residues Asp47 and 112–115 (EGVG). The Mg(2+) site is built by Asp47 and Glu112.

Belongs to the dethiobiotin synthetase family. In terms of assembly, homodimer. It depends on Mg(2+) as a cofactor.

The protein localises to the cytoplasm. It catalyses the reaction (7R,8S)-7,8-diammoniononanoate + CO2 + ATP = (4R,5S)-dethiobiotin + ADP + phosphate + 3 H(+). It functions in the pathway cofactor biosynthesis; biotin biosynthesis; biotin from 7,8-diaminononanoate: step 1/2. Catalyzes a mechanistically unusual reaction, the ATP-dependent insertion of CO2 between the N7 and N8 nitrogen atoms of 7,8-diaminopelargonic acid (DAPA, also called 7,8-diammoniononanoate) to form a ureido ring. In Endomicrobium trichonymphae, this protein is ATP-dependent dethiobiotin synthetase BioD.